The following is a 493-amino-acid chain: 2-amino-4-deoxychorismate synthase (493 aa).

This sequence belongs to the anthranilate synthase component I family. Mg(2+) serves as cofactor.

It catalyses the reaction (2S)-2-amino-4-deoxychorismate + L-glutamate = chorismate + L-glutamine. Functionally, converts chorismate to 2-amino-4-deoxychorismate (ADIC). Involved in the biosynthesis of the benzoxazolinate moiety of the enediyne antitumor antibiotic C-1027. This chain is 2-amino-4-deoxychorismate synthase (sgcD), found in Streptomyces globisporus.